The sequence spans 78 residues: Sec-independent protein translocase protein TatA (78 aa).

The helical transmembrane segment at 1-21 (MGMPSMPELLIILLIVVLLFG) threads the bilayer. The segment at 46 to 78 (DEEEVATENKKEIEEKTTASTTKTTADQDTTKA) is disordered. Positions 52 to 62 (TENKKEIEEKT) are enriched in basic and acidic residues. Over residues 63 to 78 (TASTTKTTADQDTTKA) the composition is skewed to low complexity.

Belongs to the TatA/E family. As to quaternary structure, the Tat system comprises two distinct complexes: a TatABC complex, containing multiple copies of TatA, TatB and TatC subunits, and a separate TatA complex, containing only TatA subunits. Substrates initially bind to the TatABC complex, which probably triggers association of the separate TatA complex to form the active translocon.

It is found in the cell inner membrane. Its function is as follows. Part of the twin-arginine translocation (Tat) system that transports large folded proteins containing a characteristic twin-arginine motif in their signal peptide across membranes. TatA could form the protein-conducting channel of the Tat system. In Nitratiruptor sp. (strain SB155-2), this protein is Sec-independent protein translocase protein TatA.